The primary structure comprises 416 residues: Transcription termination factor Rho (416 aa).

Positions 51-121 (LIYSYGELDI…LKLIYVNGEK (71 aa)) constitute a Rho RNA-BD domain. ATP contacts are provided by residues 162-167 (GKGQRG), 174-179 (KAGKTT), and arginine 205.

The protein belongs to the Rho family. As to quaternary structure, homohexamer. The homohexamer assembles into an open ring structure.

Functionally, facilitates transcription termination by a mechanism that involves Rho binding to the nascent RNA, activation of Rho's RNA-dependent ATPase activity, and release of the mRNA from the DNA template. This Streptobacillus moniliformis (strain ATCC 14647 / DSM 12112 / NCTC 10651 / 9901) protein is Transcription termination factor Rho.